A 399-amino-acid chain; its full sequence is MSRFQRVAVLGSTGSIGESTLDVIARHPEQLAVFALSAHSRIERLAEQAAASAAAVVVVPDAAARQRFLAAWPAGRTPPEIRVGAQALADTAADAACDTVMAAIVGAAGLPAALAAAQAGKRVLLANKEALVAAGALFMRAVRANGAELLPIDSEHNAIFQCLPHEGRASAPEQPARGVRRLILTASGGPFRRHDPLDLHEVTPDQACAHPNWSMGRKISVDSATMLNKGLEVIEAHWLFAMPPERIEVLIHPQSVVHSMVEYDDGSVLAQLGQPDMRTPISYGLGFPERLASGVGPLDLARWGRLEFETPDLRRFPCLQLAFDALRAGQAACVALNAANEVAVDAFLSGRLRYTWISRVIAAALEWQQRQSSVTLDSLADVLALDAATRAYAGNLGLA.

Residues T13, G14, S15, I16, and N127 each coordinate NADPH. K128 lines the 1-deoxy-D-xylulose 5-phosphate pocket. E129 is a binding site for NADPH. D153 provides a ligand contact to Mn(2+). Positions 154, 155, 187, and 210 each coordinate 1-deoxy-D-xylulose 5-phosphate. Residue E155 coordinates Mn(2+). An NADPH-binding site is contributed by G216. 1-deoxy-D-xylulose 5-phosphate contacts are provided by S223, N228, K229, and E232. E232 is a binding site for Mn(2+).

The protein belongs to the DXR family. Mg(2+) serves as cofactor. It depends on Mn(2+) as a cofactor.

The enzyme catalyses 2-C-methyl-D-erythritol 4-phosphate + NADP(+) = 1-deoxy-D-xylulose 5-phosphate + NADPH + H(+). It participates in isoprenoid biosynthesis; isopentenyl diphosphate biosynthesis via DXP pathway; isopentenyl diphosphate from 1-deoxy-D-xylulose 5-phosphate: step 1/6. Catalyzes the NADPH-dependent rearrangement and reduction of 1-deoxy-D-xylulose-5-phosphate (DXP) to 2-C-methyl-D-erythritol 4-phosphate (MEP). In Bordetella petrii (strain ATCC BAA-461 / DSM 12804 / CCUG 43448), this protein is 1-deoxy-D-xylulose 5-phosphate reductoisomerase.